A 462-amino-acid polypeptide reads, in one-letter code: tRNA modification GTPase MnmE (462 aa).

Residues Arg-26, Glu-91, and Arg-130 each contribute to the (6S)-5-formyl-5,6,7,8-tetrahydrofolate site. The TrmE-type G domain maps to 228 to 382; that stretch reads GLSTAKIGRP…IEERINDIFF (155 aa). Asn-238 lines the K(+) pocket. Residues 238 to 243, 257 to 263, and 282 to 285 contribute to the GTP site; these read NVGKSQ, TDIEGTT, and DTAG. Position 242 (Ser-242) interacts with Mg(2+). Positions 257, 259, and 262 each coordinate K(+). Thr-263 is a binding site for Mg(2+). Lys-462 is a binding site for (6S)-5-formyl-5,6,7,8-tetrahydrofolate.

The protein belongs to the TRAFAC class TrmE-Era-EngA-EngB-Septin-like GTPase superfamily. TrmE GTPase family. As to quaternary structure, homodimer. Heterotetramer of two MnmE and two MnmG subunits. It depends on K(+) as a cofactor.

The protein localises to the cytoplasm. In terms of biological role, exhibits a very high intrinsic GTPase hydrolysis rate. Involved in the addition of a carboxymethylaminomethyl (cmnm) group at the wobble position (U34) of certain tRNAs, forming tRNA-cmnm(5)s(2)U34. The polypeptide is tRNA modification GTPase MnmE (Streptococcus agalactiae).